Consider the following 349-residue polypeptide: MFSSLLEAAKSSPFHGPLTPARCDAPAQGMAASAAPVGDSCEFGSTKYFALCGLGGILSCGITHTAVVPLDLVKCRLQVDADKYKNVVNGFRVSVREEGLRGLAKGWAPTFIGYSLQGLCKFGLYEVFKVQYNNMLDEETAYTYRTFVYLAASASAEFFADIALSPLEAAKVRIQTMPGVRQHTARRVAQDGPERGAWARSTRALVPLWGRQIPYTMMKFACFEKTVELLYKHVVPKPRAECSKGEQLVVTFAAGYIAGVFCAIVSHPADTVVSKLNQDKTATVGSIVGKLGFAGVWKGLGPRIIMIGTLTALQWFIYDAVKVWLRMPRPPPAEMPESMRKRLEAEGKL.

Solcar repeat units lie at residues 47-131 (KYFA…FKVQ), 144-229 (YRTF…TVEL), and 246-324 (EQLV…VKVW). A run of 6 helical transmembrane segments spans residues 48 to 68 (YFAL…TAVV), 108 to 128 (APTF…YEVF), 147 to 167 (FVYL…LSPL), 207 to 227 (PLWG…EKTV), 248 to 268 (LVVT…VSHP), and 304 to 324 (IIMI…VKVW).

The protein belongs to the mitochondrial carrier (TC 2.A.29) family.

Its subcellular location is the mitochondrion inner membrane. Functionally, transport of phosphate groups from the cytosol to the mitochondrial matrix. The protein is Phosphate carrier protein, mitochondrial of Choristoneura fumiferana (Spruce budworm moth).